The following is a 678-amino-acid chain: Pescadillo homolog (678 aa).

The disordered stretch occupies residues 265–289 (PQQQTKTNNTTKKSKSTTAAAAATT). The segment covering 269 to 289 (TKTNNTTKKSKSTTAAAAATT) has biased composition (low complexity). In terms of domain architecture, BRCT spans 352-442 (DVTTLFKGFH…LLLPYSEYTI (91 aa)). 2 disordered regions span residues 485-601 (TNAE…EDTK) and 626-678 (ATAN…KQKK). Over residues 505–518 (SDGESDDEDDEDLE) the composition is skewed to acidic residues. Basic and acidic residues predominate over residues 519-531 (HLETRYTEELRKE). Over residues 541–574 (VDDDDEEEEDGEEDGEEEEEEEDGEEESESESES) the composition is skewed to acidic residues. Residues 581–640 (VLTKKQRDELNKQKQAEEDTKLAELMIRKKDKWIYNKVKETNQQRATANQTLLEKRNKVE) adopt a coiled-coil conformation. Basic and acidic residues-rich tracts occupy residues 585–601 (KQRD…EDTK) and 633–643 (LEKRNKVESGK). The segment covering 649–678 (VKVAPQPKKPAPLVKKSQQKQQQASKKQKK) has biased composition (low complexity).

This sequence belongs to the pescadillo family.

It is found in the nucleus. The protein localises to the nucleolus. It localises to the nucleoplasm. Required for maturation of ribosomal RNAs and formation of the large ribosomal subunit. The protein is Pescadillo homolog of Dictyostelium discoideum (Social amoeba).